Reading from the N-terminus, the 226-residue chain is Phosphoribosylformylglycinamidine synthase subunit PurQ (226 aa).

The Glutamine amidotransferase type-1 domain maps to 3–226 (RVAVIRFPGT…FESLVEWCRS (224 aa)). Cysteine 86 (nucleophile) is an active-site residue. Residues histidine 199 and glutamate 201 contribute to the active site.

As to quaternary structure, part of the FGAM synthase complex composed of 1 PurL, 1 PurQ and 2 PurS subunits.

It is found in the cytoplasm. It carries out the reaction N(2)-formyl-N(1)-(5-phospho-beta-D-ribosyl)glycinamide + L-glutamine + ATP + H2O = 2-formamido-N(1)-(5-O-phospho-beta-D-ribosyl)acetamidine + L-glutamate + ADP + phosphate + H(+). It catalyses the reaction L-glutamine + H2O = L-glutamate + NH4(+). It functions in the pathway purine metabolism; IMP biosynthesis via de novo pathway; 5-amino-1-(5-phospho-D-ribosyl)imidazole from N(2)-formyl-N(1)-(5-phospho-D-ribosyl)glycinamide: step 1/2. Functionally, part of the phosphoribosylformylglycinamidine synthase complex involved in the purines biosynthetic pathway. Catalyzes the ATP-dependent conversion of formylglycinamide ribonucleotide (FGAR) and glutamine to yield formylglycinamidine ribonucleotide (FGAM) and glutamate. The FGAM synthase complex is composed of three subunits. PurQ produces an ammonia molecule by converting glutamine to glutamate. PurL transfers the ammonia molecule to FGAR to form FGAM in an ATP-dependent manner. PurS interacts with PurQ and PurL and is thought to assist in the transfer of the ammonia molecule from PurQ to PurL. The protein is Phosphoribosylformylglycinamidine synthase subunit PurQ of Methanopyrus kandleri (strain AV19 / DSM 6324 / JCM 9639 / NBRC 100938).